Reading from the N-terminus, the 198-residue chain is Nucleoid occlusion factor SlmA (198 aa).

The HTH tetR-type domain occupies 9-70 (RNRREEILQS…SLIEFIEDSL (62 aa)). Residues 33–52 (TTAKLAASVGVSEAALYRHF) constitute a DNA-binding region (H-T-H motif). The stretch at 117 to 145 (EQDRLQGRINQLFERIEAQLRQVLREKKM) forms a coiled coil.

It belongs to the nucleoid occlusion factor SlmA family. Homodimer. Interacts with FtsZ.

Its subcellular location is the cytoplasm. It localises to the nucleoid. In terms of biological role, required for nucleoid occlusion (NO) phenomenon, which prevents Z-ring formation and cell division over the nucleoid. Acts as a DNA-associated cell division inhibitor that binds simultaneously chromosomal DNA and FtsZ, and disrupts the assembly of FtsZ polymers. SlmA-DNA-binding sequences (SBS) are dispersed on non-Ter regions of the chromosome, preventing FtsZ polymerization at these regions. This chain is Nucleoid occlusion factor SlmA, found in Cronobacter sakazakii (strain ATCC BAA-894) (Enterobacter sakazakii).